The primary structure comprises 427 residues: Protein phosphatase methylesterase 1 (427 aa).

The segment at 1–49 is disordered; sequence MSELQKSFAKAKLAKLPPEAPPFSMHPPRDEDDSESASSTGTVVPSPSR. Over residues 36-49 the composition is skewed to polar residues; it reads SASSTGTVVPSPSR. Catalysis depends on residues Ser-207, Asp-233, and His-364. The disordered stretch occupies residues 402–427; it reads SAAMKQGAEAGAVPPFGRGQGSSHKP.

Belongs to the AB hydrolase superfamily.

The enzyme catalyses [phosphatase 2A protein]-C-terminal L-leucine methyl ester + H2O = [phosphatase 2A protein]-C-terminal L-leucine + methanol + H(+). Functionally, demethylates proteins that have been reversibly carboxymethylated. Demethylates the phosphatase PP2A catalytic subunit. The sequence is that of Protein phosphatase methylesterase 1 (ppe1) from Aspergillus oryzae (strain ATCC 42149 / RIB 40) (Yellow koji mold).